Consider the following 711-residue polypeptide: Long-chain-fatty-acid--CoA ligase 4 (711 aa).

Residues 8-28 (LTIILLPVHLLITIYSALIFI) form a helical; Signal-anchor for type III membrane protein membrane-spanning segment. Topologically, residues 29–711 (PWYFLTNAKK…KDIERMYGGK (683 aa)) are cytoplasmic. The residue at position 447 (serine 447) is a Phosphoserine.

This sequence belongs to the ATP-dependent AMP-binding enzyme family. Requires Mg(2+) as cofactor.

The protein localises to the mitochondrion outer membrane. It localises to the peroxisome membrane. Its subcellular location is the microsome membrane. The protein resides in the endoplasmic reticulum membrane. It is found in the cell membrane. The enzyme catalyses a long-chain fatty acid + ATP + CoA = a long-chain fatty acyl-CoA + AMP + diphosphate. The catalysed reaction is (5Z,8Z,11Z,14Z)-eicosatetraenoate + ATP + CoA = (5Z,8Z,11Z,14Z)-eicosatetraenoyl-CoA + AMP + diphosphate. It catalyses the reaction hexadecanoate + ATP + CoA = hexadecanoyl-CoA + AMP + diphosphate. It carries out the reaction (E)-hexadec-2-enoate + ATP + CoA = (2E)-hexadecenoyl-CoA + AMP + diphosphate. The enzyme catalyses 15-hydroxy-(5Z,8Z,11Z,13E)-eicosatetraenoate + ATP + CoA = 15-hydroxy-(5Z,8Z,11Z,13E)-eicosatetraenoyl-CoA + AMP + diphosphate. The catalysed reaction is 12-hydroxy-(5Z,8Z,10E,14Z)-eicosatetraenoate + ATP + CoA = 12-hydroxy-(5Z,8Z,10E,14Z)-eicosatetraenoyl-CoA + AMP + diphosphate. It catalyses the reaction 5-hydroxy-(6E,8Z,11Z,14Z)-eicosatetraenoate + ATP + CoA = 5-hydroxy-(6E,8Z,11Z,14Z)-eicosatetraenoyl-CoA + AMP + diphosphate. It carries out the reaction 5,6-epoxy-(8Z,11Z,14Z)-eicosatrienoate + ATP + CoA = 5,6-epoxy-(8Z,11Z,14Z)-eicosatrienoyl-CoA + AMP + diphosphate. The enzyme catalyses 14,15-epoxy-(5Z,8Z,11Z)-eicosatrienoate + ATP + CoA = 14,15-epoxy-(5Z,8Z,11Z)-eicosatrienoyl-CoA + AMP + diphosphate. The catalysed reaction is 11,12-epoxy-(5Z,8Z,14Z)-eicosatrienoate + ATP + CoA = 11,12-epoxy-(5Z,8Z,14Z)-eicosatrienoyl-CoA + AMP + diphosphate. It catalyses the reaction 8,9-epoxy-(5Z,11Z,14Z)-eicosatrienoate + ATP + CoA = 8,9-epoxy-(5Z,11Z,14Z)-eicosatrienoyl-CoA + AMP + diphosphate. With respect to regulation, both triacsin C and rosiglitazone inhibit arachidonoyl-CoA ligase activity. Catalyzes the conversion of long-chain fatty acids to their active form acyl-CoA for both synthesis of cellular lipids, and degradation via beta-oxidation. Preferentially activates arachidonate and eicosapentaenoate as substrates. Preferentially activates 8,9-EET &gt; 14,15-EET &gt; 5,6-EET &gt; 11,12-EET. Modulates glucose-stimulated insulin secretion by regulating the levels of unesterified EETs. Modulates prostaglandin E2 secretion. This is Long-chain-fatty-acid--CoA ligase 4 (ACSL4) from Homo sapiens (Human).